Consider the following 1380-residue polypeptide: DNA-directed RNA polymerase subunit beta (1380 aa).

The protein belongs to the RNA polymerase beta chain family. As to quaternary structure, the RNAP catalytic core consists of 2 alpha, 1 beta, 1 beta' and 1 omega subunit. When a sigma factor is associated with the core the holoenzyme is formed, which can initiate transcription.

The enzyme catalyses RNA(n) + a ribonucleoside 5'-triphosphate = RNA(n+1) + diphosphate. Functionally, DNA-dependent RNA polymerase catalyzes the transcription of DNA into RNA using the four ribonucleoside triphosphates as substrates. The protein is DNA-directed RNA polymerase subunit beta of Rhizobium meliloti (strain 1021) (Ensifer meliloti).